The chain runs to 622 residues: Chaperone protein HscA homolog (622 aa).

Belongs to the heat shock protein 70 family.

In terms of biological role, chaperone involved in the maturation of iron-sulfur cluster-containing proteins. Has a low intrinsic ATPase activity which is markedly stimulated by HscB. The chain is Chaperone protein HscA homolog from Burkholderia pseudomallei (strain 668).